A 498-amino-acid chain; its full sequence is Beta-amylase 5 (498 aa).

Substrate is bound by residues Asp56, His96, and Asp104. Catalysis depends on Glu189, which acts as the Proton donor. Lys298, His303, and Thr345 together coordinate substrate. Catalysis depends on Glu383, which acts as the Proton acceptor. Substrate is bound by residues 384-385 (NA) and Arg423.

This sequence belongs to the glycosyl hydrolase 14 family. As to expression, detected in phloem sieve elements.

The protein localises to the cytoplasm. It catalyses the reaction Hydrolysis of (1-&gt;4)-alpha-D-glucosidic linkages in polysaccharides so as to remove successive maltose units from the non-reducing ends of the chains.. Beta-amylase activity. Major cytosolic beta-amylase isoform in rosette leaves and inflorescences stems. The chain is Beta-amylase 5 (BAM5) from Arabidopsis thaliana (Mouse-ear cress).